The primary structure comprises 122 residues: Large ribosomal subunit protein uL14 (122 aa).

The protein belongs to the universal ribosomal protein uL14 family. In terms of assembly, part of the 50S ribosomal subunit. Forms a cluster with proteins L3 and L19. In the 70S ribosome, L14 and L19 interact and together make contacts with the 16S rRNA in bridges B5 and B8.

Its function is as follows. Binds to 23S rRNA. Forms part of two intersubunit bridges in the 70S ribosome. This is Large ribosomal subunit protein uL14 from Sulfurihydrogenibium sp. (strain YO3AOP1).